A 544-amino-acid polypeptide reads, in one-letter code: Elongator complex protein 3 (544 aa).

Residues 79 to 369 (RTASGIAVVA…YRIQRDIPMP (291 aa)) enclose the Radical SAM core domain. Positions 96, 106, and 109 each coordinate [4Fe-4S] cluster. Residues lysine 161, 472-475 (ELHV), 495-497 (FGT), and tyrosine 528 each bind acetyl-CoA. Residues 393 to 544 (TKCRDIRARE…LDGPYMSKWL (152 aa)) form the N-acetyltransferase domain.

It belongs to the ELP3 family. In terms of assembly, component of the elongator complex. The cofactor is [4Fe-4S] cluster.

Its subcellular location is the cytoplasm. The catalysed reaction is uridine(34) in tRNA + acetyl-CoA + S-adenosyl-L-methionine + H2O = 5-(carboxymethyl)uridine(34) in tRNA + 5'-deoxyadenosine + L-methionine + CoA + 2 H(+). It participates in tRNA modification; 5-methoxycarbonylmethyl-2-thiouridine-tRNA biosynthesis. Catalytic tRNA acetyltransferase subunit of the elongator complex which is required for multiple tRNA modifications, including mcm5U (5-methoxycarbonylmethyl uridine), mcm5s2U (5-methoxycarbonylmethyl-2-thiouridine), and ncm5U (5-carbamoylmethyl uridine). In the elongator complex, acts as a tRNA uridine(34) acetyltransferase, which mediates formation of carboxymethyluridine in the wobble base at position 34 in tRNAs. This Schizosaccharomyces pombe (strain 972 / ATCC 24843) (Fission yeast) protein is Elongator complex protein 3.